A 391-amino-acid polypeptide reads, in one-letter code: DNA replication and repair protein RecF (391 aa).

An ATP-binding site is contributed by 30 to 37; it reads GLNGQGKT.

This sequence belongs to the RecF family.

The protein resides in the cytoplasm. The RecF protein is involved in DNA metabolism; it is required for DNA replication and normal SOS inducibility. RecF binds preferentially to single-stranded, linear DNA. It also seems to bind ATP. The chain is DNA replication and repair protein RecF from Kineococcus radiotolerans (strain ATCC BAA-149 / DSM 14245 / SRS30216).